We begin with the raw amino-acid sequence, 135 residues long: Large ribosomal subunit protein uL16m (135 aa).

This sequence belongs to the universal ribosomal protein uL16 family.

The protein resides in the mitochondrion. The polypeptide is Large ribosomal subunit protein uL16m (RPL16) (Prototheca wickerhamii).